A 341-amino-acid polypeptide reads, in one-letter code: Solute carrier family 25 member 43 (341 aa).

Solcar repeat units follow at residues 11-101 (TGGQ…TDDL), 105-185 (SQWS…LLVY), and 200-298 (SLPQ…LYQN). 6 helical membrane passes run 16-36 (LLCA…LELA), 68-88 (LWKG…VQLA), 110-130 (IMAG…TDLI), 166-186 (GVSL…LVYM), 205-225 (FANV…FETV), and 262-282 (VLGL…YFGI).

The protein belongs to the mitochondrial carrier (TC 2.A.29) family.

It localises to the mitochondrion inner membrane. In Homo sapiens (Human), this protein is Solute carrier family 25 member 43 (SLC25A43).